The following is a 245-amino-acid chain: tRNA pseudouridine synthase A (245 aa).

Asp52 (nucleophile) is an active-site residue. Tyr112 lines the substrate pocket.

The protein belongs to the tRNA pseudouridine synthase TruA family. As to quaternary structure, homodimer.

It catalyses the reaction uridine(38/39/40) in tRNA = pseudouridine(38/39/40) in tRNA. Functionally, formation of pseudouridine at positions 38, 39 and 40 in the anticodon stem and loop of transfer RNAs. The protein is tRNA pseudouridine synthase A of Dictyoglomus turgidum (strain DSM 6724 / Z-1310).